Consider the following 701-residue polypeptide: Glycine--tRNA ligase beta subunit (701 aa).

The protein belongs to the class-II aminoacyl-tRNA synthetase family. In terms of assembly, tetramer of two alpha and two beta subunits.

The protein resides in the cytoplasm. The catalysed reaction is tRNA(Gly) + glycine + ATP = glycyl-tRNA(Gly) + AMP + diphosphate. This Bradyrhizobium sp. (strain BTAi1 / ATCC BAA-1182) protein is Glycine--tRNA ligase beta subunit.